The sequence spans 235 residues: Thiamine import ATP-binding protein ThiQ (235 aa).

An ABC transporter domain is found at 2 to 230; sequence LKLIDITWLY…QASASALLGI (229 aa). Residue 32 to 39 participates in ATP binding; it reads GPSGAGKS.

Belongs to the ABC transporter superfamily. Thiamine importer (TC 3.A.1.19.1) family. The complex is composed of two ATP-binding proteins (ThiQ), two transmembrane proteins (ThiP) and a solute-binding protein (ThiB).

It is found in the cell inner membrane. The catalysed reaction is thiamine(out) + ATP + H2O = thiamine(in) + ADP + phosphate + H(+). Functionally, part of the ABC transporter complex ThiBPQ involved in thiamine import. Responsible for energy coupling to the transport system. The polypeptide is Thiamine import ATP-binding protein ThiQ (Salmonella choleraesuis (strain SC-B67)).